The primary structure comprises 419 residues: Tyrosine--tRNA ligase (419 aa).

Tyrosine 34 is a binding site for L-tyrosine. The 'HIGH' region signature appears at 39 to 48 (PTADSLHLGN). Positions 169 and 173 each coordinate L-tyrosine. Positions 229–233 (KFGKS) match the 'KMSKS' region motif. Lysine 232 is an ATP binding site. Residues 353–419 (LTLIELLISV…GKKKNFVLTY (67 aa)) form the S4 RNA-binding domain.

The protein belongs to the class-I aminoacyl-tRNA synthetase family. TyrS type 1 subfamily. As to quaternary structure, homodimer.

Its subcellular location is the cytoplasm. It carries out the reaction tRNA(Tyr) + L-tyrosine + ATP = L-tyrosyl-tRNA(Tyr) + AMP + diphosphate + H(+). In terms of biological role, catalyzes the attachment of tyrosine to tRNA(Tyr) in a two-step reaction: tyrosine is first activated by ATP to form Tyr-AMP and then transferred to the acceptor end of tRNA(Tyr). In Lactococcus lactis subsp. cremoris (strain MG1363), this protein is Tyrosine--tRNA ligase.